Consider the following 902-residue polypeptide: AP-4 complex accessory subunit RUSC1 (902 aa).

Disordered stretches follow at residues 31–67 (ELQEGPLSTPPPPGDTGGKESRGPCSGTLVDANSNSP), 81–155 (LENR…PGTC), 189–227 (QDVPSPGLEEEDERAEQDLPTSELLEADDGKIDAGKTEP), and 247–450 (KTTE…AQAG). Low complexity predominate over residues 94–112 (AASPSDPGCSSSLSSCSDL). The segment covering 249–261 (TENNNTGWKNNGN) has biased composition (low complexity). Positions 277 to 289 (WKTNTRITDSGSK) are enriched in polar residues. Residues 291–309 (DAGKIDGGWRSDVSEEPVP) show a composition bias toward basic and acidic residues. Pro residues-rich tracts occupy residues 381–390 (PAPPVPPRDP) and 398–407 (PPRPPPPPVP). The segment covering 433–450 (PAAGEEAPAAKEPGAQAG) has biased composition (low complexity). Positions 470-605 (MAEAQSGTGQ…FHAFILGLLN (136 aa)) are interaction with TRAF6. The RUN domain occupies 522-666 (DVGHLVLTTL…LTFHLDLLFE (145 aa)). An interaction with IKBKG region spans residues 606–672 (TKQLELWFSS…LLFEHHHHLP (67 aa)). Disordered stretches follow at residues 706–729 (LRGTSKEAASDPSDSPNLPTPGSW) and 747–776 (GFPLSRWAPGRHGTAAEEGAQERPLPTDEM). The 59-residue stretch at 844-902 (QTHRAVRALCDHTAARPDQLSFRRGEVLRVITTVDEDWLRCGRDGMEGLVPVGYTSLVL) folds into the SH3 domain.

Associated component of the adapter-like complex 4 (AP-4). Interacts with IKBKG and TRAF6. Interacts with F-actin, acetylated actin, TUBB3, STX1A, KIF5B and KLC1. Post-translationally, phosphorylated on serine residues following nuclear translocation. In terms of processing, polyubiquitinated; polyubiquitination involves TRAF6. In terms of tissue distribution, predominantly expressed in brain.

It localises to the cytoplasm. The protein resides in the nucleus. The protein localises to the cytoskeleton. It is found in the cytoplasmic vesicle. Its subcellular location is the early endosome. It localises to the postsynaptic density. The protein resides in the golgi apparatus. Functionally, associates with the adapter-like complex 4 (AP-4) and may therefore play a role in vesicular trafficking of proteins at the trans-Golgi network. Signaling adapter which plays a role in neuronal differentiation. Involved in regulation of NGF-dependent neurite outgrowth. May play a role in neuronal vesicular trafficking, specifically involving pre-synaptic membrane proteins. Seems to be involved in signaling pathways that are regulated by the prolonged activation of MAPK. Can regulate the polyubiquitination of IKBKG and thus may be involved in regulation of the NF-kappa-B pathway. This Homo sapiens (Human) protein is AP-4 complex accessory subunit RUSC1.